The primary structure comprises 126 residues: Fatty acid-binding protein, liver (126 aa).

Alanine 2 carries the N-acetylalanine modification.

This sequence belongs to the calycin superfamily. Fatty-acid binding protein (FABP) family. In terms of tissue distribution, liver.

The protein resides in the cytoplasm. In terms of biological role, binds free fatty acids and their coenzyme A derivatives, bilirubin, and some other small molecules in the cytoplasm. May be involved in intracellular lipid transport this L-FABP binds only one fatty acid/molecule. Has more affinity for trans-parinaric acid than for cis-parinaric acid. This is Fatty acid-binding protein, liver (fabp1) from Rhamdia sapo (South American catfish).